The following is a 227-amino-acid chain: Phosphoribosylformylglycinamidine synthase subunit PurQ (227 aa).

The region spanning 2 to 226 (KFAVIQFPGS…VKAWKEEQVN (225 aa)) is the Glutamine amidotransferase type-1 domain. Residue C86 is the Nucleophile of the active site. Catalysis depends on residues H195 and E197.

As to quaternary structure, part of the FGAM synthase complex composed of 1 PurL, 1 PurQ and 2 PurS subunits.

It is found in the cytoplasm. It carries out the reaction N(2)-formyl-N(1)-(5-phospho-beta-D-ribosyl)glycinamide + L-glutamine + ATP + H2O = 2-formamido-N(1)-(5-O-phospho-beta-D-ribosyl)acetamidine + L-glutamate + ADP + phosphate + H(+). It catalyses the reaction L-glutamine + H2O = L-glutamate + NH4(+). Its pathway is purine metabolism; IMP biosynthesis via de novo pathway; 5-amino-1-(5-phospho-D-ribosyl)imidazole from N(2)-formyl-N(1)-(5-phospho-D-ribosyl)glycinamide: step 1/2. Its function is as follows. Part of the phosphoribosylformylglycinamidine synthase complex involved in the purines biosynthetic pathway. Catalyzes the ATP-dependent conversion of formylglycinamide ribonucleotide (FGAR) and glutamine to yield formylglycinamidine ribonucleotide (FGAM) and glutamate. The FGAM synthase complex is composed of three subunits. PurQ produces an ammonia molecule by converting glutamine to glutamate. PurL transfers the ammonia molecule to FGAR to form FGAM in an ATP-dependent manner. PurS interacts with PurQ and PurL and is thought to assist in the transfer of the ammonia molecule from PurQ to PurL. This is Phosphoribosylformylglycinamidine synthase subunit PurQ from Listeria monocytogenes serotype 4a (strain HCC23).